Reading from the N-terminus, the 335-residue chain is Cathepsin B (335 aa).

Residues 1 to 19 (MWQLLATLSCLLVLTSARS) form the signal peptide. Positions 20 to 79 (SLHFPPLSDEMVNYVNKQNTTWKAGHNFYNVDLSYVKKLCGAILGGPKLPQRDAFAADMV) are cleaved as a propeptide — activation peptide. Cystine bridges form between Cys93–Cys122, Cys105–Cys150, Cys141–Cys207, Cys142–Cys146, Cys179–Cys211, and Cys187–Cys198. Cys108 is an active-site residue. Residue Asn192 is glycosylated (N-linked (GlcNAc...) asparagine). Lys220 carries the N6-acetyllysine modification. Catalysis depends on residues His278 and Asn298. A propeptide spanning residues 333–335 (HQH) is cleaved from the precursor.

Belongs to the peptidase C1 family. In terms of assembly, dimer of a heavy chain and a light chain cross-linked by a disulfide bond. Interacts with SRPX2. Directly interacts with SHKBP1.

The protein localises to the lysosome. It localises to the melanosome. The protein resides in the secreted. It is found in the extracellular space. Its subcellular location is the apical cell membrane. The enzyme catalyses Hydrolysis of proteins with broad specificity for peptide bonds. Preferentially cleaves -Arg-Arg-|-Xaa bonds in small molecule substrates (thus differing from cathepsin L). In addition to being an endopeptidase, shows peptidyl-dipeptidase activity, liberating C-terminal dipeptides.. Thiol protease which is believed to participate in intracellular degradation and turnover of proteins. Cleaves matrix extracellular phosphoglycoprotein MEPE. Involved in the solubilization of cross-linked TG/thyroglobulin in the thyroid follicle lumen. Has also been implicated in tumor invasion and metastasis. This chain is Cathepsin B (CTSB), found in Ovis aries (Sheep).